We begin with the raw amino-acid sequence, 821 residues long: Cell wall integrity transcriptional regulator CAS5 (821 aa).

5 disordered regions span residues 42-66, 219-245, 305-432, 544-576, and 607-750; these read HLQSLQQQSQVQSQAPQQVQSLNQH, FESPQSHIQSQPSYSQGYHNQNSLSTP, TKSN…STSQ, QEEEQEHQDEQMEIDSFESNEKNARPTLSTSSL, and VKQE…KHKC. Polar residues predominate over residues 222–245; sequence PQSHIQSQPSYSQGYHNQNSLSTP. Residues 305-318 are compositionally biased toward low complexity; the sequence is TKSNSTSSYNSTLN. The segment covering 319-329 has biased composition (polar residues); it reads PFYTPSQQLSS. Positions 372–387 are enriched in basic residues; the sequence is QLRKAKSYTSLLRKKK. Low complexity predominate over residues 396 to 412; it reads QNQQHQQQQQQQQQQQQ. A compositionally biased stretch (polar residues) spans 422–432; that stretch reads QNLSFPNSTSQ. The segment covering 545–561 has biased composition (acidic residues); the sequence is EEEQEHQDEQMEIDSFE. 2 stretches are compositionally biased toward low complexity: residues 662–674 and 684–693; these read LVNKGNKTNNNDT and KNTNGNGNND. The segment covering 694 to 714 has biased composition (acidic residues); it reads NDNDSEENNDNVDDADDDDDG. C2H2-type zinc fingers lie at residues 748 to 770 and 776 to 801; these read HKCPICESRFQRPEHVKRHLKSH and FECQMPNCGKRFNRKDNLKAHLKKIH. Phosphoserine is present on serine 769.

Phosphorylation at Ser-769 and probably additional serine residues. GLC7 dephosphorylates CAS5 in response to cell wall stress which leads to its translocation to the nucleus.

Its subcellular location is the nucleus. The protein localises to the cytoplasm. Functionally, transcription factor that acts with ADA2 to promote cell wall integrity. Regulates the expression of target genes in concert with the transcriptional regulators SWI4 and SWI6. Crucial for proper cell cycle dynamics and responses to echinocandins, which inhibit beta-1,3-glucan synthesis. Has distinct transcriptional targets under basal and stress conditions. Also regulates a transcriptional network that influences the response to fluconazole. Plays a key role in adherence, hyphal development, and virulence. Acts as a repressor of hypha-specific genes during yeast-form growth. In Candida albicans (strain SC5314 / ATCC MYA-2876) (Yeast), this protein is Cell wall integrity transcriptional regulator CAS5.